The sequence spans 331 residues: MKEFIVNAINYDKKIVTTAIESGADYIIIPEDKEEEAKKLGRVNFIIADKKGNLTDDFVIVTIKNKQDEEKAAQLAKAGKKVIVRTTDWTIIPLENLIAQSENIYAEVKNADEASIAVGILEKGVKGVVLETEDLNEIKRVASVIKETTEKVELIRAKVTAIIPVGMGDRVAVDTTSLFKRGEGMLVGNSSAGMILVHAETEESPYVASRPFRVNAGAVHMYTRVPGGKTVYLCELEAGKEVMAYDIDGNGRAVVVGRAKIERRPMLLIEAEYNGKKLSAVLQNAETIRVVGGDGSLISVVDLKEGDEILGYVEEAGRHFGMKVEETILEK.

Belongs to the archaeal-type DHQ synthase family.

The chain is 3-dehydroquinate synthase homolog from Persephonella marina (strain DSM 14350 / EX-H1).